The following is a 319-amino-acid chain: ATP-dependent 6-phosphofructokinase (319 aa).

Residue Gly-11 coordinates ATP. ADP is bound at residue Arg-21–Arg-25. ATP is bound by residues Arg-72–Tyr-73 and Gly-102–Ser-105. Asp-103 contacts Mg(2+). Thr-125 to Asp-127 provides a ligand contact to substrate. Residue Asp-127 is the Proton acceptor of the active site. Arg-154 lines the ADP pocket. Substrate is bound by residues Arg-162 and Met-169 to Arg-171. Residues Gly-185–Glu-187, Arg-211, and Lys-213–His-215 contribute to the ADP site. Substrate-binding positions include Glu-222, Arg-243, and His-249–Arg-252.

It belongs to the phosphofructokinase type A (PFKA) family. ATP-dependent PFK group I subfamily. Prokaryotic clade 'B1' sub-subfamily. Homotetramer. Mg(2+) is required as a cofactor.

The protein localises to the cytoplasm. It carries out the reaction beta-D-fructose 6-phosphate + ATP = beta-D-fructose 1,6-bisphosphate + ADP + H(+). The protein operates within carbohydrate degradation; glycolysis; D-glyceraldehyde 3-phosphate and glycerone phosphate from D-glucose: step 3/4. With respect to regulation, allosterically activated by ADP and other diphosphonucleosides, and allosterically inhibited by phosphoenolpyruvate. Its function is as follows. Catalyzes the phosphorylation of D-fructose 6-phosphate to fructose 1,6-bisphosphate by ATP, the first committing step of glycolysis. This Listeria innocua serovar 6a (strain ATCC BAA-680 / CLIP 11262) protein is ATP-dependent 6-phosphofructokinase.